The following is a 342-amino-acid chain: Holliday junction branch migration complex subunit RuvB (342 aa).

Positions 1–184 are large ATPase domain (RuvB-L); sequence MDNERVITAV…FGIVQRLEFY (184 aa). Residues isoleucine 23, arginine 24, glycine 65, lysine 68, threonine 69, threonine 70, 131-133, arginine 174, tyrosine 184, and arginine 221 each bind ATP; that span reads EDY. Threonine 69 lines the Mg(2+) pocket. Residues 185–255 form a small ATPAse domain (RuvB-S) region; sequence SVDDLSGIVS…IAQRALDMLE (71 aa). The interval 258–342 is head domain (RuvB-H); it reads SCGLDGTDRR…PRQDGDLFND (85 aa). DNA-binding residues include arginine 313 and arginine 318.

The protein belongs to the RuvB family. As to quaternary structure, homohexamer. Forms an RuvA(8)-RuvB(12)-Holliday junction (HJ) complex. HJ DNA is sandwiched between 2 RuvA tetramers; dsDNA enters through RuvA and exits via RuvB. An RuvB hexamer assembles on each DNA strand where it exits the tetramer. Each RuvB hexamer is contacted by two RuvA subunits (via domain III) on 2 adjacent RuvB subunits; this complex drives branch migration. In the full resolvosome a probable DNA-RuvA(4)-RuvB(12)-RuvC(2) complex forms which resolves the HJ.

The protein localises to the cytoplasm. It catalyses the reaction ATP + H2O = ADP + phosphate + H(+). In terms of biological role, the RuvA-RuvB-RuvC complex processes Holliday junction (HJ) DNA during genetic recombination and DNA repair, while the RuvA-RuvB complex plays an important role in the rescue of blocked DNA replication forks via replication fork reversal (RFR). RuvA specifically binds to HJ cruciform DNA, conferring on it an open structure. The RuvB hexamer acts as an ATP-dependent pump, pulling dsDNA into and through the RuvAB complex. RuvB forms 2 homohexamers on either side of HJ DNA bound by 1 or 2 RuvA tetramers; 4 subunits per hexamer contact DNA at a time. Coordinated motions by a converter formed by DNA-disengaged RuvB subunits stimulates ATP hydrolysis and nucleotide exchange. Immobilization of the converter enables RuvB to convert the ATP-contained energy into a lever motion, pulling 2 nucleotides of DNA out of the RuvA tetramer per ATP hydrolyzed, thus driving DNA branch migration. The RuvB motors rotate together with the DNA substrate, which together with the progressing nucleotide cycle form the mechanistic basis for DNA recombination by continuous HJ branch migration. Branch migration allows RuvC to scan DNA until it finds its consensus sequence, where it cleaves and resolves cruciform DNA. The sequence is that of Holliday junction branch migration complex subunit RuvB from Alcanivorax borkumensis (strain ATCC 700651 / DSM 11573 / NCIMB 13689 / SK2).